We begin with the raw amino-acid sequence, 143 residues long: Anti-sigma F factor (143 aa).

It belongs to the anti-sigma-factor family.

The enzyme catalyses L-seryl-[protein] + ATP = O-phospho-L-seryl-[protein] + ADP + H(+). The catalysed reaction is L-threonyl-[protein] + ATP = O-phospho-L-threonyl-[protein] + ADP + H(+). Its function is as follows. Binds to sigma F and blocks its ability to form an RNA polymerase holoenzyme (E-sigma F). Phosphorylates SpoIIAA on a serine residue. This phosphorylation may enable SpoIIAA to act as an anti-anti-sigma factor that counteracts SpoIIAB and thus releases sigma F from inhibition. The chain is Anti-sigma F factor from Thermoanaerobacter pseudethanolicus (strain ATCC 33223 / 39E) (Clostridium thermohydrosulfuricum).